The chain runs to 127 residues: DNA-directed RNA polymerases I, II, and III subunit RPABC2 (127 aa).

Over residues 1–32 (MSDNEDNFDGDDFDDVEEDEGLDDLENAEEEG) the composition is skewed to acidic residues. The disordered stretch occupies residues 1–52 (MSDNEDNFDGDDFDDVEEDEGLDDLENAEEEGQVNVEILPSGERPQANQKRI). Ser-2 is modified (N-acetylserine). Ser-2 carries the phosphoserine; by CK2 modification.

This sequence belongs to the archaeal Rpo6/eukaryotic RPB6 RNA polymerase subunit family. As to quaternary structure, component of the RNA polymerase I (Pol I), RNA polymerase II (Pol II) and RNA polymerase III (Pol III) complexes consisting of at least 13, 12 and 17 subunits, respectively. Pol I complex consists of a ten-subunit catalytic core composed of POLR1A/RPA1, POLR1B/RPA2, POLR1C/RPAC1, POLR1D/RPAC2, POLR1H/RPA12, POLR2E/RPABC1, POLR2F/RPABC2, POLR2H/RPABC3, POLR2K/RPABC4 and POLR2L/RPABC5; a mobile stalk subunit POLR1F/RPA43 protruding from the core and additional subunits homologous to general transcription factors POLR1E/RPA49 and POLR1G/RPA34. Part of Pol I pre-initiation complex (PIC), in which Pol I core assembles with RRN3 and promoter-bound UTBF and SL1/TIF-IB complex. Pol II complex contains a ten-subunit catalytic core composed of POLR2A/RPB1, POLR2B/RPB2, POLR2C/RPB3, POLR2I/RPB9, POLR2J/RPB11, POLR2E/RPABC1, POLR2F/RPABC2, POLR2H/RPABC3, POLR2K/RPABC4 and POLR2L/RPABC5 and a mobile stalk composed of two subunits POLR2D/RPB4 and POLR2G/RPB7. Part of Pol II(G) complex, in which Pol II core associates with an additional subunit POLR2M; unlike conventional Pol II, Pol II(G) functions as a transcriptional repressor. Part of TBP-based Pol II pre-initiation complex (PIC), in which Pol II core assembles with general transcription factors and other specific initiation factors including GTF2E1, GTF2E2, GTF2F1, GTF2F2, TCEA1, ERCC2, ERCC3, GTF2H2, GTF2H3, GTF2H4, GTF2H5, GTF2A1, GTF2A2, GTF2B and TBP; this large multi-subunit PIC complex mediates DNA unwinding and targets Pol II core to the transcription start site where the first phosphodiester bond forms. Pol III complex consists of a ten-subunit catalytic core composed of POLR3A/RPC1, POLR3B/RPC2, POLR1C/RPAC1, POLR1D/RPAC2, POLR3K/RPC10, POLR2E/RPABC1, POLR2F/RPABC2, POLR2H/RPABC3, POLR2K/RPABC4 and POLR2L/RPABC5; a mobile stalk composed of two subunits POLR3H/RPC8 and CRCP/RPC9, protruding from the core and functioning primarily in transcription initiation; and additional subunits homologous to general transcription factors of the RNA polymerase II machinery, POLR3C/RPC3-POLR3F/RPC6-POLR3G/RPC7 heterotrimer required for transcription initiation and POLR3D/RPC4-POLR3E/RPC5 heterodimer involved in both transcription initiation and termination.

Its subcellular location is the nucleus. It is found in the nucleolus. DNA-dependent RNA polymerase catalyzes the transcription of DNA into RNA using the four ribonucleoside triphosphates as substrates. Common component of RNA polymerases I, II, and III which synthesize ribosomal RNA precursors, mRNA precursors and many functional non-coding RNAs, and small RNAs, such as 5S rRNA and tRNAs, respectively. Pol II is the central component of the basal RNA polymerase II transcription machinery. Pols are composed of mobile elements that move relative to each other. In Pol II, POLR2F/RPABC2 is part of the clamp element and together with parts of POLR2A/RPB1 and POLR2B/RPB2 forms a pocket to which the POLR2D/RPB4-POLR2G/RPB7 subcomplex binds. The protein is DNA-directed RNA polymerases I, II, and III subunit RPABC2 (POLR2F) of Bos taurus (Bovine).